The following is a 148-amino-acid chain: Snaclec 27 (148 aa).

The first 23 residues, 1-23 (WGDSSSSASACWSCFSLVSGIGA), serve as a signal peptide directing secretion. 3 cysteine pairs are disulfide-bonded: Cys27–Cys38, Cys55–Cys144, and Cys121–Cys136. In terms of domain architecture, C-type lectin spans 34–145 (HEGHCYKVFS…CSSTQQFVCK (112 aa)).

The protein belongs to the snaclec family. In terms of assembly, heterodimer; disulfide-linked. In terms of tissue distribution, expressed by the venom gland.

The protein localises to the secreted. Its function is as follows. Interferes with one step of hemostasis (modulation of platelet aggregation, or coagulation cascade, for example). This is Snaclec 27 from Echis ocellatus (Ocellated saw-scaled viper).